We begin with the raw amino-acid sequence, 38 residues long: MIEPLLCGIVLGLIPVTLLGLFVAAWNQYRRGGSALGG.

The helical transmembrane segment at 5–25 (LLCGIVLGLIPVTLLGLFVAA) threads the bilayer.

The protein belongs to the PetG family. As to quaternary structure, the 4 large subunits of the cytochrome b6-f complex are cytochrome b6, subunit IV (17 kDa polypeptide, PetD), cytochrome f and the Rieske protein, while the 4 small subunits are PetG, PetL, PetM and PetN. The complex functions as a dimer.

It is found in the cellular thylakoid membrane. Functionally, component of the cytochrome b6-f complex, which mediates electron transfer between photosystem II (PSII) and photosystem I (PSI), cyclic electron flow around PSI, and state transitions. PetG is required for either the stability or assembly of the cytochrome b6-f complex. This Parasynechococcus marenigrum (strain WH8102) protein is Cytochrome b6-f complex subunit 5.